The chain runs to 944 residues: E3 ubiquitin-protein ligase JMJ24 (944 aa).

Disordered regions lie at residues Gln-20–Asp-40 and Ala-77–Gly-103. The 46-residue stretch at Ile-38–Ala-83 folds into the WRC domain. Positions Lys-73–Ala-80 match the Nuclear localization signal 1 motif. The PHD-type; atypical zinc finger occupies Gly-217 to Leu-269. Residues Cys-220, Cys-223, Cys-234, Cys-237, Cys-243, Cys-246, Cys-263, and Cys-266 each coordinate Zn(2+). The Nuclear localization signal 2 signature appears at Glu-323–Glu-330. Residues Pro-621–Arg-873 enclose the JmjC domain. Residues Glu-685–Glu-703 show a composition bias toward basic and acidic residues. The segment at Glu-685–Arg-715 is disordered.

The protein belongs to the JARID1 histone demethylase family. As to quaternary structure, homodimer. Interacts with RDR2. Binds to CMT3. Associates with the E2 ubiquitin-conjugating enzyme UBC10. In terms of processing, self-ubiquitinates. Expressed in inflorescences, flowers, roots, siliques, leaves and stems, especially in the vasculature (mainly phloem), with highest levels in floral organs.

The protein resides in the nucleus. The catalysed reaction is S-ubiquitinyl-[E2 ubiquitin-conjugating enzyme]-L-cysteine + [acceptor protein]-L-lysine = [E2 ubiquitin-conjugating enzyme]-L-cysteine + N(6)-ubiquitinyl-[acceptor protein]-L-lysine.. In terms of biological role, binds histone H3 but seems to have lost demethylase activity probably due to its inability to bind iron Fe(2+). Possesses E3 ubiquitin ligase activity and targets directly CMT3 for proteasomal degradation to initiate destabilization of the heterochromatic state (e.g. CHG cytosine methylation and H3K9me2) of endogenous silenced loci. Required for the removal of repressive H3K9me2 histone marks to facilitate the transcription of AtSN1, AtMu1c, solo LTR and SDC, thus counteracting their transcriptional silencing. Mainly required to promote the basal level transcription of silenced loci such as TE and repeats targeted by RNA-dependent DNA methylation (RdDM) for silencing, a specialized branch of the RNA interference (RNAi) pathway. Also cooperates with RNAi pathways for gene silencing both by contributing to the production of 24-nt siRNA to initiate RdDM and by recruiting RDR2 to enable local transcripts to make dsRNA. Antagonizes histone H3K9 demethylase IBM1/JMJ25 function. This chain is E3 ubiquitin-protein ligase JMJ24, found in Arabidopsis thaliana (Mouse-ear cress).